The chain runs to 381 residues: Diguanylate cyclase DosC (381 aa).

His-98 contacts heme. Positions 325–381 constitute a GGDEF domain; the sequence is TPLSVLIIDVDKFKEINDTWGHNTGDEILRKVSFLSQKRLVKSKILGAGSSRKLAVS. Asp-333 contributes to the Mg(2+) binding site. Positions 341 and 350 each coordinate substrate.

Heme is required as a cofactor. The cofactor is Mg(2+).

It catalyses the reaction 2 GTP = 3',3'-c-di-GMP + 2 diphosphate. It functions in the pathway purine metabolism; 3',5'-cyclic di-GMP biosynthesis. In terms of biological role, globin-coupled heme-based oxygen sensor protein displaying diguanylate cyclase (DGC) activity in response to oxygen availability. Thus, catalyzes the synthesis of cyclic diguanylate (c-di-GMP) via the condensation of 2 GTP molecules. Cyclic-di-GMP is a second messenger which controls cell surface-associated traits in bacteria. The polypeptide is Diguanylate cyclase DosC (dosC) (Shigella flexneri).